A 493-amino-acid polypeptide reads, in one-letter code: Glutamyl-tRNA(Gln) amidotransferase subunit A (493 aa).

Residues Lys78 and Ser158 each act as charge relay system in the active site. Ser182 acts as the Acyl-ester intermediate in catalysis.

The protein belongs to the amidase family. GatA subfamily. Heterotrimer of A, B and C subunits.

The catalysed reaction is L-glutamyl-tRNA(Gln) + L-glutamine + ATP + H2O = L-glutaminyl-tRNA(Gln) + L-glutamate + ADP + phosphate + H(+). Allows the formation of correctly charged Gln-tRNA(Gln) through the transamidation of misacylated Glu-tRNA(Gln) in organisms which lack glutaminyl-tRNA synthetase. The reaction takes place in the presence of glutamine and ATP through an activated gamma-phospho-Glu-tRNA(Gln). This Methylorubrum extorquens (strain PA1) (Methylobacterium extorquens) protein is Glutamyl-tRNA(Gln) amidotransferase subunit A.